A 119-amino-acid chain; its full sequence is Large ribosomal subunit protein uL18 (119 aa).

Belongs to the universal ribosomal protein uL18 family. As to quaternary structure, part of the 50S ribosomal subunit; part of the 5S rRNA/L5/L18/L25 subcomplex. Contacts the 5S and 23S rRNAs.

Functionally, this is one of the proteins that bind and probably mediate the attachment of the 5S RNA into the large ribosomal subunit, where it forms part of the central protuberance. The sequence is that of Large ribosomal subunit protein uL18 from Cereibacter sphaeroides (strain ATCC 17025 / ATH 2.4.3) (Rhodobacter sphaeroides).